A 139-amino-acid polypeptide reads, in one-letter code: Diuretic hormone 41 (139 aa).

Positions 1-20 (MMWWALWCAVVVAAGSGVAA) are cleaved as a signal peptide. A propeptide spanning residues 21 to 79 (APAPDSLSPLDMVQMDSSAPDDETLYAMSPMAARYSAGAPWLYLLADMPRDSQTGSGRV) is cleaved from the precursor. The residue at position 122 (I122) is an Isoleucine amide.

Belongs to the sauvagine/corticotropin-releasing factor/urotensin I family. Expressed in corpora cardiaca (CC), corpora allata (CA), antennal lobe (AL) and gnathal ganglion (GNG) (at protein level). Expression in CC and CA detected in all animals, in GNG in most animals, expression in AL detected in few animals (at protein level).

The protein resides in the secreted. In terms of biological role, regulation of fluid secretion. This is Diuretic hormone 41 from Agrotis ipsilon (Black cutworm moth).